The primary structure comprises 67 residues: Small ribosomal subunit protein eS31 (67 aa).

Zn(2+)-binding residues include Cys-31, Cys-34, Cys-49, and Cys-52. The segment at 31 to 52 (CPKCGAGVFMAEHLNRFACGKC) adopts a C4-type zinc-finger fold.

It belongs to the eukaryotic ribosomal protein eS31 family. Part of the 30S ribosomal subunit. Zn(2+) serves as cofactor.

The sequence is that of Small ribosomal subunit protein eS31 from Methanococcus maripaludis (strain C6 / ATCC BAA-1332).